The chain runs to 252 residues: Large ribosomal subunit protein uL29m (252 aa).

Residue Lys-146 is modified to N6-acetyllysine.

Belongs to the universal ribosomal protein uL29 family. As to quaternary structure, component of the mitochondrial ribosome large subunit (39S) which comprises a 16S rRNA and about 50 distinct proteins.

The protein localises to the mitochondrion. This chain is Large ribosomal subunit protein uL29m (MRPL47), found in Bos taurus (Bovine).